We begin with the raw amino-acid sequence, 161 residues long: Lipid droplet assembly factor 1 (161 aa).

The Cytoplasmic portion of the chain corresponds to 1–43 (MAEEEPSSVSRDLQELQRKLGLLLESFQNNSKVVAFMKSPVGR). Residues 44–61 (FLDRHPFLVLTVLMFVTM) traverse the membrane as a helical segment. Residues 62–67 (SAIPVG) are Lumenal-facing. The chain crosses the membrane as a helical span at residues 68-87 (FFLLIVVLTSLGALMGAILL). Over 88–93 (EGLVIS) the chain is Cytoplasmic. A helical membrane pass occupies residues 94-110 (VCGLSLLCILCGLGFVS). The Lumenal segment spans residues 111–116 (LALSGI). Residues 117–133 (TMMSYVVVSCLMSYWFS) form a helical membrane-spanning segment. Residues 134–161 (PSRPPTQQHANIDSQLAMKFTESEKLGL) are Cytoplasmic-facing.

This sequence belongs to the LDAF1 family. As to quaternary structure, interacts with BSCL2/seipin to form an oligomeric complex.

It is found in the endoplasmic reticulum membrane. It localises to the lipid droplet. In terms of biological role, plays an important role in the formation of lipid droplets (LD) which are storage organelles at the center of lipid and energy homeostasis. In association with BSCL2/seipin, defines the sites of LD formation in the endoplasmic reticulum. The polypeptide is Lipid droplet assembly factor 1 (Rattus norvegicus (Rat)).